The chain runs to 352 residues: Protein RecA (352 aa).

G74–T81 provides a ligand contact to ATP.

Belongs to the RecA family.

It is found in the cytoplasm. Its function is as follows. Can catalyze the hydrolysis of ATP in the presence of single-stranded DNA, the ATP-dependent uptake of single-stranded DNA by duplex DNA, and the ATP-dependent hybridization of homologous single-stranded DNAs. It interacts with LexA causing its activation and leading to its autocatalytic cleavage. In Ralstonia nicotianae (strain ATCC BAA-1114 / GMI1000) (Ralstonia solanacearum), this protein is Protein RecA.